The following is a 384-amino-acid chain: D-alanine--D-alanine ligase (384 aa).

The region spanning 167 to 374 (KKLFAAEGLP…YPTLLATMVD (208 aa)) is the ATP-grasp domain. 195 to 250 (CERLSLPVFVKPARGGSSIGISRVSSWGQLPSAIAYARRHDPKVIVEAAVNGRELE) is a binding site for ATP. Residues D329, E341, and N343 each coordinate Mg(2+).

It belongs to the D-alanine--D-alanine ligase family. Requires Mg(2+) as cofactor. Mn(2+) is required as a cofactor.

It localises to the cytoplasm. The enzyme catalyses 2 D-alanine + ATP = D-alanyl-D-alanine + ADP + phosphate + H(+). It participates in cell wall biogenesis; peptidoglycan biosynthesis. Functionally, cell wall formation. The polypeptide is D-alanine--D-alanine ligase (Mycobacterium leprae (strain TN)).